The chain runs to 431 residues: Adenylosuccinate synthetase (431 aa).

Residues 13 to 19 (GDEGKGK) and 41 to 43 (GHT) each bind GTP. The active-site Proton acceptor is the Asp14. Asp14 and Gly41 together coordinate Mg(2+). IMP contacts are provided by residues 14-17 (DEGK), 39-42 (NAGH), Thr130, Arg144, Gln225, Thr240, and Arg304. Catalysis depends on His42, which acts as the Proton donor. 300–306 (ATTGRKR) lines the substrate pocket. Residues Arg306, 332–334 (KLD), and 415–417 (STG) each bind GTP.

Belongs to the adenylosuccinate synthetase family. In terms of assembly, homodimer. It depends on Mg(2+) as a cofactor.

The protein resides in the cytoplasm. It catalyses the reaction IMP + L-aspartate + GTP = N(6)-(1,2-dicarboxyethyl)-AMP + GDP + phosphate + 2 H(+). It functions in the pathway purine metabolism; AMP biosynthesis via de novo pathway; AMP from IMP: step 1/2. Plays an important role in the de novo pathway of purine nucleotide biosynthesis. Catalyzes the first committed step in the biosynthesis of AMP from IMP. The polypeptide is Adenylosuccinate synthetase (Shewanella woodyi (strain ATCC 51908 / MS32)).